Consider the following 150-residue polypeptide: D-aminoacyl-tRNA deacylase (150 aa).

Positions 138–139 (GP) match the Gly-cisPro motif, important for rejection of L-amino acids motif.

This sequence belongs to the DTD family. In terms of assembly, homodimer.

The protein localises to the cytoplasm. It carries out the reaction glycyl-tRNA(Ala) + H2O = tRNA(Ala) + glycine + H(+). It catalyses the reaction a D-aminoacyl-tRNA + H2O = a tRNA + a D-alpha-amino acid + H(+). An aminoacyl-tRNA editing enzyme that deacylates mischarged D-aminoacyl-tRNAs. Also deacylates mischarged glycyl-tRNA(Ala), protecting cells against glycine mischarging by AlaRS. Acts via tRNA-based rather than protein-based catalysis; rejects L-amino acids rather than detecting D-amino acids in the active site. By recycling D-aminoacyl-tRNA to D-amino acids and free tRNA molecules, this enzyme counteracts the toxicity associated with the formation of D-aminoacyl-tRNA entities in vivo and helps enforce protein L-homochirality. This is D-aminoacyl-tRNA deacylase from Bacteroides fragilis (strain ATCC 25285 / DSM 2151 / CCUG 4856 / JCM 11019 / LMG 10263 / NCTC 9343 / Onslow / VPI 2553 / EN-2).